The chain runs to 159 residues: Phosphopantetheine adenylyltransferase (159 aa).

Ser8 contributes to the substrate binding site. Residues 8-9 (SF) and His16 each bind ATP. Substrate contacts are provided by Lys40, Thr72, and Arg86. ATP is bound by residues 87-89 (GLR), Glu97, and 122-128 (HSFVSSS).

It belongs to the bacterial CoaD family. In terms of assembly, homohexamer. The cofactor is Mg(2+).

It localises to the cytoplasm. The enzyme catalyses (R)-4'-phosphopantetheine + ATP + H(+) = 3'-dephospho-CoA + diphosphate. Its pathway is cofactor biosynthesis; coenzyme A biosynthesis; CoA from (R)-pantothenate: step 4/5. Reversibly transfers an adenylyl group from ATP to 4'-phosphopantetheine, yielding dephospho-CoA (dPCoA) and pyrophosphate. This is Phosphopantetheine adenylyltransferase from Synechococcus sp. (strain JA-2-3B'a(2-13)) (Cyanobacteria bacterium Yellowstone B-Prime).